The primary structure comprises 249 residues: Coat protein (249 aa).

Residues 1-28 are disordered; it reads MVDSKKTETPQVVDASKKAENSKTSQAG.

Belongs to the potexvirus capsid protein family.

Its subcellular location is the virion. In terms of biological role, required for genome encapsidation. Forms ribonucleoprotein complexes along with TGB1 helicase and viral RNA. This chain is Coat protein, found in Solanum tuberosum (Potato).